Here is a 42-residue protein sequence, read N- to C-terminus: uncharacterized protein (42 aa).

This is an uncharacterized protein from Treponema pallidum (strain Nichols).